The primary structure comprises 704 residues: MEFVATCMPGLADLLSDELGSLGISVTETGRAHVSFSGGVADALKVCLWSRLSERVLLHLATLGVTPDIAPEKLAASQDWLSLVGNNAPVHLHIEHGAEVRGDNRISAKRFIHALPEQFAISREPKGSCCIRARLDLNEAHLWLDLAGEPLHRRGYRLAGGRAPLRETLAAAILWAVGWGKEGRHSALIDPFCGSGTLVIEAALIAAGRAAGAQRQHYGFQQWRGCRRQLWLDAQKEAGESGKRPVPAVSLKGFDSEASTLQLALQNAERAGVRNAIHFERRELGALRRRDFVDNGIVVGNPPWGERLEEKPQAGWLHYALGRILSVRAPGYQALLLGADAEVMDRSGMNLEQQWRLKNGPFNNFIRLYSPRKQTPANVVKVADDSAFNVPEGAQPLLNRLRKNGKHLRRWLEREDIQCYRLYDRDLPEFNVAVDIYADQVLVQEFKAPKTIDPEKAKERRDWAVTAVRAALGVHREQVHLRTREKQKGNQQYQKLDAQGQYRVVREGQSQLLINLQDYLDTGLFLDHRPTRLRIAEEASGKRFLNLFAYTGSATVHAAVGGAKRTVTVDSSKRYLDWAACNLAANGFSTDQHELARADTMRWLDECKEQFDLVFCDPPTFSNNKSRSDFVVEEHHGDLIRKIMRCLEPGGVLYFSCNYRRFQMDESISKWYAVEDISRWSIPEDFRRNEKIHYCYAIRHVEDA.

The protein belongs to the methyltransferase superfamily. RlmKL family.

The protein resides in the cytoplasm. It carries out the reaction guanosine(2445) in 23S rRNA + S-adenosyl-L-methionine = N(2)-methylguanosine(2445) in 23S rRNA + S-adenosyl-L-homocysteine + H(+). The enzyme catalyses guanosine(2069) in 23S rRNA + S-adenosyl-L-methionine = N(2)-methylguanosine(2069) in 23S rRNA + S-adenosyl-L-homocysteine + H(+). Its function is as follows. Specifically methylates the guanine in position 2445 (m2G2445) and the guanine in position 2069 (m7G2069) of 23S rRNA. The sequence is that of Ribosomal RNA large subunit methyltransferase K/L from Alcanivorax borkumensis (strain ATCC 700651 / DSM 11573 / NCIMB 13689 / SK2).